The following is a 179-amino-acid chain: Ribosome maturation factor RimM (179 aa).

Residues valine 102 to leucine 175 form the PRC barrel domain.

This sequence belongs to the RimM family. As to quaternary structure, binds ribosomal protein uS19.

It localises to the cytoplasm. Functionally, an accessory protein needed during the final step in the assembly of 30S ribosomal subunit, possibly for assembly of the head region. Essential for efficient processing of 16S rRNA. May be needed both before and after RbfA during the maturation of 16S rRNA. It has affinity for free ribosomal 30S subunits but not for 70S ribosomes. This chain is Ribosome maturation factor RimM, found in Frankia casuarinae (strain DSM 45818 / CECT 9043 / HFP020203 / CcI3).